A 159-amino-acid polypeptide reads, in one-letter code: Gigasin-1 (159 aa).

Disordered stretches follow at residues 1-33 (GKAT…HDQT) and 80-159 (KESY…KYRR).

Component of the organic matrix of calcified shell layers.

The chain is Gigasin-1 from Magallana gigas (Pacific oyster).